The primary structure comprises 199 residues: Recombination protein RecR (199 aa).

The C4-type zinc finger occupies 58 to 73; sequence CSVCTNLTDRDPCRIC. The Toprim domain maps to 81–176; that stretch reads AVICVVEEPR…KVTRIAHGLP (96 aa).

This sequence belongs to the RecR family.

Functionally, may play a role in DNA repair. It seems to be involved in an RecBC-independent recombinational process of DNA repair. It may act with RecF and RecO. This Heliobacterium modesticaldum (strain ATCC 51547 / Ice1) protein is Recombination protein RecR.